Reading from the N-terminus, the 215-residue chain is Probable ribosome-binding factor A, chloroplastic (215 aa).

The N-terminal 52 residues, 1 to 52, are a transit peptide targeting the chloroplast; it reads MPNLLHTNQSHFFFLHHPPIYTVSSKTQAFHFPQSMAPVNLRTNLSVRRTVR. A compositionally biased stretch (basic and acidic residues) spans 183–192; that stretch reads KGSGEGKTEP. Residues 183–210 form a disordered region; that stretch reads KGSGEGKTEPSDSTEDDQDWEVDDPDED. The span at 194–210 shows a compositional bias: acidic residues; it reads DSTEDDQDWEVDDPDED.

The protein belongs to the RbfA family.

It is found in the plastid. It localises to the chloroplast. The polypeptide is Probable ribosome-binding factor A, chloroplastic (Arabidopsis thaliana (Mouse-ear cress)).